A 563-amino-acid polypeptide reads, in one-letter code: Alpha-keto-acid decarboxylase (563 aa).

Glu-59 contributes to the thiamine diphosphate binding site. A disordered region spans residues 347-367; sequence SSPPVASPPAEPLPPPPPREQ. The segment covering 351 to 366 has biased composition (pro residues); the sequence is VASPPAEPLPPPPPRE. Residues 394-476 are thiamine pyrophosphate binding; that stretch reads TSFYGMADHR…VVVNNDGYTV (83 aa). Residues Asp-444, Asn-471, and Gly-473 each coordinate Mg(2+).

The protein belongs to the TPP enzyme family. The cofactor is a metal cation. Requires thiamine diphosphate as cofactor.

Decarboxylates branched-chain and aromatic alpha-keto acids to aldehydes. The polypeptide is Alpha-keto-acid decarboxylase (kdc) (Mycolicibacterium paratuberculosis (strain ATCC BAA-968 / K-10) (Mycobacterium paratuberculosis)).